Reading from the N-terminus, the 238-residue chain is 1-(5-phosphoribosyl)-5-[(5-phosphoribosylamino)methylideneamino] imidazole-4-carboxamide isomerase (238 aa).

D8 serves as the catalytic Proton acceptor. Residue D130 is the Proton donor of the active site.

This sequence belongs to the HisA/HisF family.

Its subcellular location is the cytoplasm. The catalysed reaction is 1-(5-phospho-beta-D-ribosyl)-5-[(5-phospho-beta-D-ribosylamino)methylideneamino]imidazole-4-carboxamide = 5-[(5-phospho-1-deoxy-D-ribulos-1-ylimino)methylamino]-1-(5-phospho-beta-D-ribosyl)imidazole-4-carboxamide. The protein operates within amino-acid biosynthesis; L-histidine biosynthesis; L-histidine from 5-phospho-alpha-D-ribose 1-diphosphate: step 4/9. This chain is 1-(5-phosphoribosyl)-5-[(5-phosphoribosylamino)methylideneamino] imidazole-4-carboxamide isomerase, found in Methanococcus vannielii (strain ATCC 35089 / DSM 1224 / JCM 13029 / OCM 148 / SB).